The sequence spans 651 residues: Probable potassium transport system protein Kup (651 aa).

The next 12 membrane-spanning stretches (helical) occupy residues 41–61 (LVLGALGVVYGDIGTSPIYAF), 82–102 (VVSLIFWALTLVVTVKYVLFV), 130–150 (LILGVGICGAALFFGDAVITP), 163–183 (IVAPNLTPFVVPAAVVILVTL), 194–214 (VAIVFGPIMALWFVALGASGL), 235–255 (FLTVSPAVAFVTVGAVFLAMT), 276–296 (WLWIVFPCLLLNYFGQAAFIL), 309–329 (MIPSFALWPMVLLATAATVIA), 366–386 (IYIPRVNLLLGLAVVILVLGF), 395–415 (AYGIAVTGNMLVTTVLLYIAM), 426–446 (ALPIILGFLVIDMLFFSANII), and 450–470 (EGGWASIGIATVLVLIMWTWV).

This sequence belongs to the HAK/KUP transporter (TC 2.A.72) family.

The protein resides in the cell inner membrane. It catalyses the reaction K(+)(in) + H(+)(in) = K(+)(out) + H(+)(out). Functionally, transport of potassium into the cell. Likely operates as a K(+):H(+) symporter. This chain is Probable potassium transport system protein Kup, found in Brucella abortus (strain S19).